An 881-amino-acid polypeptide reads, in one-letter code: Valine--tRNA ligase (881 aa).

The 'HIGH' region motif lies at 49–59 (PNVTGKLHLGH). The 'KMSKS' region motif lies at 526–530 (KMSKS). Lys529 contacts ATP. Residues 810–881 (LADLINLDEE…VRQRLADLEK (72 aa)) adopt a coiled-coil conformation.

It belongs to the class-I aminoacyl-tRNA synthetase family. ValS type 1 subfamily. In terms of assembly, monomer.

Its subcellular location is the cytoplasm. The catalysed reaction is tRNA(Val) + L-valine + ATP = L-valyl-tRNA(Val) + AMP + diphosphate. Its function is as follows. Catalyzes the attachment of valine to tRNA(Val). As ValRS can inadvertently accommodate and process structurally similar amino acids such as threonine, to avoid such errors, it has a 'posttransfer' editing activity that hydrolyzes mischarged Thr-tRNA(Val) in a tRNA-dependent manner. This is Valine--tRNA ligase from Bacillus cereus (strain ATCC 10987 / NRS 248).